A 290-amino-acid polypeptide reads, in one-letter code: ATP synthase gamma chain (290 aa).

This sequence belongs to the ATPase gamma chain family. As to quaternary structure, F-type ATPases have 2 components, CF(1) - the catalytic core - and CF(0) - the membrane proton channel. CF(1) has five subunits: alpha(3), beta(3), gamma(1), delta(1), epsilon(1). CF(0) has three main subunits: a, b and c.

Its subcellular location is the cell inner membrane. Its function is as follows. Produces ATP from ADP in the presence of a proton gradient across the membrane. The gamma chain is believed to be important in regulating ATPase activity and the flow of protons through the CF(0) complex. This is ATP synthase gamma chain from Anaeromyxobacter sp. (strain Fw109-5).